We begin with the raw amino-acid sequence, 147 residues long: 6-pyruvoyl tetrahydrobiopterin synthase (147 aa).

H26 contacts Zn(2+). C45 serves as the catalytic Proton acceptor. The Zn(2+) site is built by H51 and H53. Residues H92 and E136 each act as charge relay system in the active site.

This sequence belongs to the PTPS family. As to quaternary structure, homohexamer formed of two homotrimers in a head to head fashion. Zn(2+) serves as cofactor.

The catalysed reaction is 7,8-dihydroneopterin 3'-triphosphate = 6-pyruvoyl-5,6,7,8-tetrahydropterin + triphosphate + H(+). Its pathway is cofactor biosynthesis; tetrahydrobiopterin biosynthesis; tetrahydrobiopterin from 7,8-dihydroneopterin triphosphate: step 1/3. Its function is as follows. Involved in the biosynthesis of tetrahydrobiopterin, an essential cofactor of aromatic amino acid hydroxylases. Catalyzes the transformation of 7,8-dihydroneopterin triphosphate into 6-pyruvoyl tetrahydropterin. The protein is 6-pyruvoyl tetrahydrobiopterin synthase (pts) of Poecilia reticulata (Guppy).